Consider the following 281-residue polypeptide: Homeobox protein Hox-A5 (281 aa).

2 disordered regions span residues 65–144 (VGNE…PCSS) and 162–183 (PLEE…SDST). Composition is skewed to polar residues over residues 68 to 99 (ERTQ…STGT) and 114 to 127 (VASS…QSQH). Low complexity predominate over residues 132–144 (NSITTPCSTPCSS). A compositionally biased stretch (polar residues) spans 172-183 (APTTPQNVSDST). Residues 187–192 (IYPWMR) carry the Antp-type hexapeptide motif. The homeobox DNA-binding region spans 205–264 (GKRARTAYTRYQTLELEKEFHFNRYLTRRRRIEIAHALCLSERQIKIWFQNRRMKWKKDN).

Belongs to the Antp homeobox family.

It is found in the nucleus. Its function is as follows. Sequence-specific transcription factor which is part of a developmental regulatory system that provides cells with specific positional identities on the anterior-posterior axis. In Morone saxatilis (Striped bass), this protein is Homeobox protein Hox-A5 (hoxa5).